Consider the following 363-residue polypeptide: 3-dehydroquinate synthase (363 aa).

NAD(+) is bound by residues 72–77, 130–131, K142, and K151; these read SGEKEK and TT. Zn(2+)-binding residues include E184, H247, and H264.

The protein belongs to the sugar phosphate cyclases superfamily. Dehydroquinate synthase family. The cofactor is Co(2+). Zn(2+) is required as a cofactor. Requires NAD(+) as cofactor.

Its subcellular location is the cytoplasm. The enzyme catalyses 7-phospho-2-dehydro-3-deoxy-D-arabino-heptonate = 3-dehydroquinate + phosphate. Its pathway is metabolic intermediate biosynthesis; chorismate biosynthesis; chorismate from D-erythrose 4-phosphate and phosphoenolpyruvate: step 2/7. In terms of biological role, catalyzes the conversion of 3-deoxy-D-arabino-heptulosonate 7-phosphate (DAHP) to dehydroquinate (DHQ). The protein is 3-dehydroquinate synthase of Bacillus thuringiensis subsp. konkukian (strain 97-27).